Consider the following 353-residue polypeptide: Protein RecA (353 aa).

65–72 (GPESSGKT) contributes to the ATP binding site.

Belongs to the RecA family.

Its subcellular location is the cytoplasm. Its function is as follows. Can catalyze the hydrolysis of ATP in the presence of single-stranded DNA, the ATP-dependent uptake of single-stranded DNA by duplex DNA, and the ATP-dependent hybridization of homologous single-stranded DNAs. It interacts with LexA causing its activation and leading to its autocatalytic cleavage. This is Protein RecA from Aeromonas salmonicida (strain A449).